The primary structure comprises 448 residues: Probable glycine dehydrogenase (decarboxylating) subunit 1 (448 aa).

The protein belongs to the GcvP family. N-terminal subunit subfamily. In terms of assembly, the glycine cleavage system is composed of four proteins: P, T, L and H. In this organism, the P 'protein' is a heterodimer of two subunits.

The catalysed reaction is N(6)-[(R)-lipoyl]-L-lysyl-[glycine-cleavage complex H protein] + glycine + H(+) = N(6)-[(R)-S(8)-aminomethyldihydrolipoyl]-L-lysyl-[glycine-cleavage complex H protein] + CO2. Functionally, the glycine cleavage system catalyzes the degradation of glycine. The P protein binds the alpha-amino group of glycine through its pyridoxal phosphate cofactor; CO(2) is released and the remaining methylamine moiety is then transferred to the lipoamide cofactor of the H protein. The sequence is that of Probable glycine dehydrogenase (decarboxylating) subunit 1 from Bacillus velezensis (strain DSM 23117 / BGSC 10A6 / LMG 26770 / FZB42) (Bacillus amyloliquefaciens subsp. plantarum).